Reading from the N-terminus, the 885-residue chain is Exosome complex component 10 (885 aa).

A Glycyl lysine isopeptide (Lys-Gly) (interchain with G-Cter in SUMO2) cross-link involves residue Lys-19. Residues 289-455 (HFISSLDELV…YIYDKMRLEM (167 aa)) enclose the 3'-5' exonuclease domain. 4 residues coordinate Mg(2+): Asp-313, Glu-315, Asp-371, and Asp-440. In terms of domain architecture, HRDC spans 503–583 (NTQQLTAFQL…QQAREMPLLK (81 aa)). Residue Lys-583 forms a Glycyl lysine isopeptide (Lys-Gly) (interchain with G-Cter in SUMO1); alternate linkage. Residue Lys-583 forms a Glycyl lysine isopeptide (Lys-Gly) (interchain with G-Cter in SUMO2); alternate linkage. Lys-710 participates in a covalent cross-link: Glycyl lysine isopeptide (Lys-Gly) (interchain with G-Cter in SUMO2). 2 stretches are compositionally biased toward basic and acidic residues: residues 776–794 (AAKK…EQKQ) and 804–816 (KPKD…KEFT). The interval 776–885 (AAKKRERATS…RGFRYNWPQR (110 aa)) is disordered. Residue Ser-821 is modified to Phosphoserine. Glycyl lysine isopeptide (Lys-Gly) (interchain with G-Cter in SUMO2) cross-links involve residues Lys-826, Lys-833, and Lys-859. Polar residues predominate over residues 831 to 848 (NSKSKVSSQFDPNKQTPS). Positions 861–871 (SVGNKSMSFPT) are enriched in polar residues. Residue Lys-873 forms a Glycyl lysine isopeptide (Lys-Gly) (interchain with G-Cter in SUMO2) linkage.

Belongs to the exosome component 10/RRP6 family. As to quaternary structure, component of the RNA exosome complex. The catalytically inactive RNA exosome core complex (Exo-9) associates with the catalytic subunit EXOSC10/RRP6 (via its N-terminus). Exo-9 may associate with DIS3 to form the nucleolar exosome complex, or DIS3L to form the cytoplasmic exosome complex. The RNA exosome complex interacts with cofactors C1D/RRP47, MPHOSPH6/MPP6 and MTREX/MTR4. Interacts with MTREX; the interaction with MTREX mediates the association of MTREX with nuclear RNA exosomes. Part of the small subunit (SSU) processome, composed of more than 70 proteins and the RNA chaperone small nucleolar RNA (snoRNA) U3. Interacts with ALYREF/THOC4. Interacts with DHX36; this interaction occurs in a RNase-insensitive manner. Interacts with NRDE2. Interacts (via C-terminus) with USP36 (via C-terminus); the interaction is facilitated by the association with RNA and promotes sumoylation of EXOSC10. The cofactor is Mg(2+). In terms of processing, sumoylated by USP36; sumoylation does not significantly affect EXOSC10 nucleolar localization and association with core exosome and USP36, but regulates the nucleolar RNA exosome activity in rRNA processing by promoting binding of EXOSC10 to pre-rRNAs. Effects of sumoylation on EXOSC10 levels vary between different studies. Sumoylation of EXOSC10 is required for the modulation of EXOSC10 effects on cellular protein translation and cell proliferation. Sumoylation is promoted by mild hypothermia.

The protein resides in the cytoplasm. The protein localises to the nucleus. It localises to the nucleolus. It is found in the nucleoplasm. Arginine-rich dipeptide repeat proteins expressed from C9orf72-derived repeat RNA interact with EXOSC10 and inhibit its ability to promote degradation of this RNA. In terms of biological role, catalytic component of the RNA exosome complex which has 3'-&gt;5' exoribonuclease activity and participates in a multitude of cellular RNA processing and degradation events. In the nucleus, the RNA exosome complex is involved in proper maturation of stable RNA species such as rRNA, snRNA and snoRNA, in the elimination of RNA processing by-products and non-coding 'pervasive' transcripts, such as antisense RNA species and promoter-upstream transcripts (PROMPTs), and of mRNAs with processing defects, thereby limiting or excluding their export to the cytoplasm. Part of the small subunit (SSU) processome, first precursor of the small eukaryotic ribosomal subunit. During the assembly of the SSU processome in the nucleolus, many ribosome biogenesis factors, an RNA chaperone and ribosomal proteins associate with the nascent pre-rRNA and work in concert to generate RNA folding, modifications, rearrangements and cleavage as well as targeted degradation of pre-ribosomal RNA by the RNA exosome. The RNA exosome may be involved in Ig class switch recombination (CSR) and/or Ig variable region somatic hypermutation (SHM) by targeting AICDA deamination activity to transcribed dsDNA substrates. In the cytoplasm, the RNA exosome complex is involved in general mRNA turnover and specifically degrades inherently unstable mRNAs containing AU-rich elements (AREs) within their 3' untranslated regions, and in RNA surveillance pathways, preventing translation of aberrant mRNAs. It seems to be involved in degradation of histone mRNA. EXOSC10 is required for nucleolar localization of C1D and probably mediates the association of MTREX, C1D and MPHOSPH6 with the RNA exosome involved in the maturation of 5.8S rRNA. Plays a role in the recruitment of replication protein A complex (RPA) and RAD51 to DNA double-strand breaks caused by irradiation, contributing to DNA repair by homologous recombination. Regulates levels of damage-induced RNAs in order to prevent DNA-RNA hybrid formation at DNA double-strand breaks and limit DNA end resection after damage. Plays a role in oocyte development, maturation and survival. Required for normal testis development and mitotic division of spermatogonia. Plays a role in proper embryo development. Required for global protein translation. Required for cell proliferation. Regulates metabolism of C9orf72-derived repeat RNA that can be translated into toxic dipeptide repeat proteins. The sequence is that of Exosome complex component 10 from Homo sapiens (Human).